Here is a 136-residue protein sequence, read N- to C-terminus: uncharacterized protein (136 aa).

Belongs to the mimivirus L163/R849 family.

This is an uncharacterized protein from Acanthamoeba polyphaga mimivirus (APMV).